A 353-amino-acid chain; its full sequence is tRNA N6-adenosine threonylcarbamoyltransferase (353 aa).

Residues H119 and H123 each contribute to the Fe cation site. Substrate is bound by residues 145–149 (LVSGG), D178, G191, and N285. D313 is a Fe cation binding site.

The protein belongs to the KAE1 / TsaD family. The cofactor is Fe(2+).

It is found in the cytoplasm. The enzyme catalyses L-threonylcarbamoyladenylate + adenosine(37) in tRNA = N(6)-L-threonylcarbamoyladenosine(37) in tRNA + AMP + H(+). Functionally, required for the formation of a threonylcarbamoyl group on adenosine at position 37 (t(6)A37) in tRNAs that read codons beginning with adenine. Is involved in the transfer of the threonylcarbamoyl moiety of threonylcarbamoyl-AMP (TC-AMP) to the N6 group of A37, together with TsaE and TsaB. TsaD likely plays a direct catalytic role in this reaction. This is tRNA N6-adenosine threonylcarbamoyltransferase from Magnetococcus marinus (strain ATCC BAA-1437 / JCM 17883 / MC-1).